Consider the following 403-residue polypeptide: Protein IQ-DOMAIN 23 (403 aa).

Residues Met-1 to Thr-43 form a disordered region. Residues Ser-10–Ala-17 carry the Nuclear localization signal motif. Residues Ser-27–Thr-43 show a composition bias toward polar residues. Residues Gln-115 to Arg-133 are calmodulin-binding. IQ domains lie at Glu-116–Lys-144 and Leu-145–Thr-167. Disordered stretches follow at residues Arg-176–His-208, Ile-242–Arg-301, and Gly-381–Val-403. Residues Leu-257–Arg-267 are compositionally biased toward basic and acidic residues.

This sequence belongs to the IQD family. Binds to multiple calmodulin (CaM) in the presence of Ca(2+) and CaM-like proteins.

The protein localises to the nucleus. It is found in the nucleolus. It localises to the cytoplasm. The protein resides in the cytoskeleton. Its subcellular location is the cell membrane. Functionally, may be involved in cooperative interactions with calmodulins or calmodulin-like proteins. Recruits calmodulin proteins to microtubules, thus being a potential scaffold in cellular signaling and trafficking. May associate with nucleic acids and regulate gene expression at the transcriptional or post-transcriptional level. The sequence is that of Protein IQ-DOMAIN 23 from Arabidopsis thaliana (Mouse-ear cress).